Reading from the N-terminus, the 430-residue chain is Adenylosuccinate synthetase (430 aa).

GTP-binding positions include 13–19 and 41–43; these read GDEGKGK and GHT. The active-site Proton acceptor is the Asp14. The Mg(2+) site is built by Asp14 and Gly41. Residues 14–17, 39–42, Thr130, Arg144, Gln225, Thr240, and Arg304 each bind IMP; these read DEGK and NAGH. The active-site Proton donor is the His42. 300–306 is a binding site for substrate; the sequence is ASTGRPR. GTP-binding positions include Arg306, 332–334, and 414–416; these read KLD and STG.

It belongs to the adenylosuccinate synthetase family. Homodimer. Mg(2+) serves as cofactor.

It localises to the cytoplasm. The catalysed reaction is IMP + L-aspartate + GTP = N(6)-(1,2-dicarboxyethyl)-AMP + GDP + phosphate + 2 H(+). The protein operates within purine metabolism; AMP biosynthesis via de novo pathway; AMP from IMP: step 1/2. Plays an important role in the de novo pathway of purine nucleotide biosynthesis. Catalyzes the first committed step in the biosynthesis of AMP from IMP. This Xylella fastidiosa (strain 9a5c) protein is Adenylosuccinate synthetase.